Consider the following 153-residue polypeptide: Peptidyl-prolyl cis-trans isomerase FKBP15-1 (153 aa).

Residues 1 to 25 (MMSSASAMKAVGFLLLLTILTLAYA) form the signal peptide. A PPIase FKBP-type domain is found at 52 to 140 (GDKIKVHYRG…IFDTELVAVN (89 aa)). A Prevents secretion from ER motif is present at residues 150–153 (KNEL).

The protein belongs to the FKBP-type PPIase family.

Its subcellular location is the endoplasmic reticulum lumen. It catalyses the reaction [protein]-peptidylproline (omega=180) = [protein]-peptidylproline (omega=0). PPIases accelerate the folding of proteins. It catalyzes the cis-trans isomerization of proline imidic peptide bonds in oligopeptides. The protein is Peptidyl-prolyl cis-trans isomerase FKBP15-1 (FKBP15-1) of Arabidopsis thaliana (Mouse-ear cress).